The following is a 455-amino-acid chain: Catalase-like protein (455 aa).

The interval Met1–Ala25 is disordered.

The protein belongs to the catalase family.

Catalytically inactive. This Staphylococcus aureus protein is Catalase-like protein (katB).